Reading from the N-terminus, the 157-residue chain is Transcriptional repressor NrdR (157 aa).

The segment at 3 to 34 is a zinc-finger region; that stretch reads CPFCGHAESQVKDSRPSEDGAAIRRRRMCPEC. The ATP-cone domain maps to 49 to 139; that stretch reads LIIVKRSGRR…VYRDFKETSD (91 aa).

This sequence belongs to the NrdR family. Zn(2+) serves as cofactor.

Negatively regulates transcription of bacterial ribonucleotide reductase nrd genes and operons by binding to NrdR-boxes. The sequence is that of Transcriptional repressor NrdR from Caulobacter vibrioides (strain ATCC 19089 / CIP 103742 / CB 15) (Caulobacter crescentus).